The primary structure comprises 290 residues: MSLFDWFAARRKDQFVGKVIQEAEEADGLWGKCPECSQVVYRKDLLENANVCSNCGHHNRINSDERIKLIADQNSFKSTDKHLSPVDPLGFKDRRAYADRLRESQSSTGMKDGVTTGVCQVEQIPLALAVMDFRFMGGSMGSVVGEKITRLIEKATNQKLPLLIVCASGGARMQEGMLSLMQMAKISGALERHREAELLYMPLLTHPTTGGVTASFAMLGDLILAEPKALIGFAGRRVIEQTLREKLPDNFQTAEYLLDHGFVDKIIPRTQLKKTLGVLLRLHGYREKRK.

The region spanning 29–290 (LWGKCPECSQ…RLHGYREKRK (262 aa)) is the CoA carboxyltransferase N-terminal domain. Residues cysteine 33, cysteine 36, cysteine 52, and cysteine 55 each contribute to the Zn(2+) site. The C4-type zinc finger occupies 33–55 (CPECSQVVYRKDLLENANVCSNC).

It belongs to the AccD/PCCB family. In terms of assembly, acetyl-CoA carboxylase is a heterohexamer composed of biotin carboxyl carrier protein (AccB), biotin carboxylase (AccC) and two subunits each of ACCase subunit alpha (AccA) and ACCase subunit beta (AccD). The cofactor is Zn(2+).

Its subcellular location is the cytoplasm. The catalysed reaction is N(6)-carboxybiotinyl-L-lysyl-[protein] + acetyl-CoA = N(6)-biotinyl-L-lysyl-[protein] + malonyl-CoA. The protein operates within lipid metabolism; malonyl-CoA biosynthesis; malonyl-CoA from acetyl-CoA: step 1/1. In terms of biological role, component of the acetyl coenzyme A carboxylase (ACC) complex. Biotin carboxylase (BC) catalyzes the carboxylation of biotin on its carrier protein (BCCP) and then the CO(2) group is transferred by the transcarboxylase to acetyl-CoA to form malonyl-CoA. This chain is Acetyl-coenzyme A carboxylase carboxyl transferase subunit beta, found in Prochlorococcus marinus (strain MIT 9211).